The chain runs to 328 residues: Protein-glutamine deamidase Cif (328 aa).

Positions 1–68 are disordered; that stretch reads MLEHGVMKIP…TNRTGENPMI (68 aa). A compositionally biased stretch (polar residues) spans 52 to 63; that stretch reads RSSSISNTNRTG. Active-site residues include cysteine 156, histidine 211, and glutamine 231.

It belongs to the Cif family.

It localises to the secreted. The protein localises to the host nucleus. It catalyses the reaction L-glutaminyl-[protein] + H2O = L-glutamyl-[protein] + NH4(+). In terms of biological role, protein-glutamine deamidase effector that inhibits the host cell cycle and other key cellular processes such as the actin network and programmed-cell death. Acts by mediating the side chain deamidation of 'Gln-40' of host NEDD8, converting it to glutamate, thereby abolishing the activity of cullin-RING-based E3 ubiquitin-protein ligase complexes (CRL complexes). Inactivation of CRL complexes prevents ubiquitination and subsequent degradation of the cyclin-dependent kinase inhibitors CDKN1A/p21 and CDKN1B/p27, leading to G1 and G2 cell cycle arrests in host cells. Deamidation of 'Gln-40' of host NEDD8 also triggers macrophage-specific programmed cell death. Also able to catalyze deamidation of 'Gln-40' of host ubiquitin in vitro; however, NEDD8 constitutes the preferred substrate in vivo. Also regulates the host NF-kappa-B signaling via activation of MAPK/ERK cascade: activation of host MAPK/ERK cascade is independent of CRL complexes inhibition, suggesting that Cif has other host protein targets than NEDD8. This Burkholderia pseudomallei (strain K96243) protein is Protein-glutamine deamidase Cif.